The primary structure comprises 387 residues: Pyrophosphate--fructose 6-phosphate 1-phosphotransferase 3 (387 aa).

Position 15 (Gly15) interacts with diphosphate. Asp114 lines the Mg(2+) pocket. Residues 140–142, 186–188, Glu247, and 308–311 each bind substrate; these read TID, MGR, and YELR. Asp142 functions as the Proton acceptor in the catalytic mechanism.

Belongs to the phosphofructokinase type A (PFKA) family. PPi-dependent PFK group II subfamily. Clade 'Short' sub-subfamily. Homotetramer. It depends on Mg(2+) as a cofactor.

The protein localises to the cytoplasm. It carries out the reaction beta-D-fructose 6-phosphate + diphosphate = beta-D-fructose 1,6-bisphosphate + phosphate + H(+). It functions in the pathway carbohydrate degradation; glycolysis; D-glyceraldehyde 3-phosphate and glycerone phosphate from D-glucose: step 3/4. With respect to regulation, non-allosteric. Functionally, catalyzes the phosphorylation of D-fructose 6-phosphate, the first committing step of glycolysis. Uses inorganic phosphate (PPi) as phosphoryl donor instead of ATP like common ATP-dependent phosphofructokinases (ATP-PFKs), which renders the reaction reversible, and can thus function both in glycolysis and gluconeogenesis. Consistently, PPi-PFK can replace the enzymes of both the forward (ATP-PFK) and reverse (fructose-bisphosphatase (FBPase)) reactions. The sequence is that of Pyrophosphate--fructose 6-phosphate 1-phosphotransferase 3 (pfk3) from Trichomonas vaginalis (strain ATCC PRA-98 / G3).